The chain runs to 332 residues: Ketol-acid reductoisomerase (NADP(+)) (332 aa).

In terms of domain architecture, KARI N-terminal Rossmann spans 1–182; it reads MATIYRDKDA…GGTRAGVLET (182 aa). NADP(+) is bound by residues 25–28, lysine 49, serine 51, and 83–86; these read YGNQ and DELQ. Histidine 108 is a catalytic residue. An NADP(+)-binding site is contributed by glycine 134. A KARI C-terminal knotted domain is found at 183 to 328; sequence TFAEETETDL…AELRAMMPWL (146 aa). 4 residues coordinate Mg(2+): aspartate 191, glutamate 195, glutamate 227, and glutamate 231. Serine 252 serves as a coordination point for substrate.

It belongs to the ketol-acid reductoisomerase family. Requires Mg(2+) as cofactor.

The catalysed reaction is (2R)-2,3-dihydroxy-3-methylbutanoate + NADP(+) = (2S)-2-acetolactate + NADPH + H(+). The enzyme catalyses (2R,3R)-2,3-dihydroxy-3-methylpentanoate + NADP(+) = (S)-2-ethyl-2-hydroxy-3-oxobutanoate + NADPH + H(+). It functions in the pathway amino-acid biosynthesis; L-isoleucine biosynthesis; L-isoleucine from 2-oxobutanoate: step 2/4. The protein operates within amino-acid biosynthesis; L-valine biosynthesis; L-valine from pyruvate: step 2/4. Functionally, involved in the biosynthesis of branched-chain amino acids (BCAA). Catalyzes an alkyl-migration followed by a ketol-acid reduction of (S)-2-acetolactate (S2AL) to yield (R)-2,3-dihydroxy-isovalerate. In the isomerase reaction, S2AL is rearranged via a Mg-dependent methyl migration to produce 3-hydroxy-3-methyl-2-ketobutyrate (HMKB). In the reductase reaction, this 2-ketoacid undergoes a metal-dependent reduction by NADPH to yield (R)-2,3-dihydroxy-isovalerate. The sequence is that of Ketol-acid reductoisomerase (NADP(+)) from Methanothrix thermoacetophila (strain DSM 6194 / JCM 14653 / NBRC 101360 / PT) (Methanosaeta thermophila).